The following is a 544-amino-acid chain: GDP-mannose 4,6-dehydratase sdnI (544 aa).

NADP(+) contacts are provided by residues 16-21, Arg41, 64-65, and 86-90; these read GITGQD, DM, and LAAQS. Substrate is bound at residue Ser90. Active-site nucleophile residues include Glu135 and Tyr157. Tyr157 provides a ligand contact to substrate. Lys161 lines the NADP(+) pocket. Asn186 contacts substrate. Residues His187 and Arg192 each contribute to the NADP(+) site. Substrate is bound by residues 192–200, Gly219, Arg225, and 303–306; these read RGTTFVTRK and RPVE. Residues 366 to 406 are disordered; it reads GETTSAVNSSPSSTAGDTYKASDGWSTSGAEGSEQTECSSV. Polar residues-rich tracts occupy residues 368-381 and 389-404; these read TTSA…STAG and GWST…TECS.

It belongs to the NAD(P)-dependent epimerase/dehydratase family. GDP-mannose 4,6-dehydratase subfamily. Requires NADP(+) as cofactor.

The catalysed reaction is GDP-alpha-D-mannose = GDP-4-dehydro-alpha-D-rhamnose + H2O. It functions in the pathway antibiotic biosynthesis. Functionally, GDP-mannose 4,6-dehydratase; part of the gene cluster that mediates the biosynthesis of sordarin and hypoxysordarin, glycoside antibiotics with a unique tetracyclic diterpene aglycone structure. First, the geranylgeranyl diphosphate synthase sdnC constructs GGDP from farnesyl diphosphate and isopentenyl diphosphate. The diterpene cyclase sdnA then catalyzes the cyclization of GGDP to afford cycloaraneosene. Cycloaraneosene is then hydroxylated four times by the putative cytochrome P450 monooxygenases sdnB, sdnE, sdnF and sdnH to give a hydroxylated cycloaraneosene derivative such as cycloaraneosene-8,9,13,19-tetraol. Although the order of the hydroxylations is unclear, at least C8, C9 and C13 of the cycloaraneosene skeleton are hydroxylated before the sordaricin formation. Dehydration of the 13-hydroxy group of the hydroxylated cycloaraneosene derivative might be catalyzed by an unassigned hypothetical protein such as sdnG and sdnP to construct the cyclopentadiene moiety. The FAD-dependent oxidoreductase sdnN is proposed to catalyze the oxidation at C9 of the hydroxylated cycloaraneosene derivative and also catalyze the Baeyer-Villiger oxidation to give the lactone intermediate. The presumed lactone intermediate would be hydrolyzed to give an acrolein moiety and a carboxylate moiety. Then, [4+2]cycloaddition would occur between the acrolein moiety and the cyclopentadiene moiety to give sordaricin. SdnN might also be involved in the [4+2]cycloaddition after the hypothesized oxidation to accommodate the oxidized product and prompt the [4+2]cycloaddition. GDP-6-deoxy-D-altrose may be biosynthesized from GDP-D-mannose by the putative GDP-mannose-4,6-dehydratase sdnI and the short-chain dehydrogenase sdnK. The glycosyltransferase sdnJ catalyzes the attachment of 6-deoxy-D-altrose onto the 19-hydroxy group of sordaricin to give 4'-O-demethylsordarin. The methyltransferase sdnD would complete the biosynthesis of sordarin. Sordarin can be further modified into hypoxysordarin. The unique acyl chain at the 3'-hydroxy group of hypoxysordarin would be constructed by an iterative type I PKS sdnO and the trans-acting polyketide methyltransferase sdnL. SdnL would be responsible for the introduction of an alpha-methyl group of the polyketide chain. Alternatively, the beta-lactamase-like protein sdnR might be responsible for the cleavage and transfer of the polyketide chain from the PKS sdnO to sordarin. Two putative cytochrome P450 monooxygenases, sdnQ and sdnT, might catalyze the epoxidations of the polyketide chain to complete the biosynthesis of hypoxysordarin. Transcriptional regulators sdnM and sdnS are presumably encoded for the transcriptional regulation of the expression of the sdn gene cluster. This is GDP-mannose 4,6-dehydratase sdnI from Sordaria araneosa (Pleurage araneosa).